We begin with the raw amino-acid sequence, 308 residues long: Probable 5-dehydro-4-deoxyglucarate dehydratase (308 aa).

Belongs to the DapA family.

The enzyme catalyses 5-dehydro-4-deoxy-D-glucarate + H(+) = 2,5-dioxopentanoate + CO2 + H2O. It participates in carbohydrate acid metabolism; D-glucarate degradation; 2,5-dioxopentanoate from D-glucarate: step 2/2. The protein is Probable 5-dehydro-4-deoxyglucarate dehydratase (ycbC) of Bacillus subtilis (strain 168).